The following is a 99-amino-acid chain: Cell division protein FtsB (99 aa).

Over 1-3 (MKF) the chain is Cytoplasmic. A helical transmembrane segment spans residues 4-21 (FVIALIVLLGLLQYRLWS). The Periplasmic segment spans residues 22 to 99 (GDNSLPEYFV…GDRSVSSPSQ (78 aa)). Residues 31–73 (VLQKQIAAQQEGNAKLNERNQVLKEEIIDLKSGTEAIEERARN) are a coiled coil.

The protein belongs to the FtsB family. In terms of assembly, part of a complex composed of FtsB, FtsL and FtsQ.

It localises to the cell inner membrane. In terms of biological role, essential cell division protein. May link together the upstream cell division proteins, which are predominantly cytoplasmic, with the downstream cell division proteins, which are predominantly periplasmic. The protein is Cell division protein FtsB of Shewanella sp. (strain ANA-3).